Consider the following 164-residue polypeptide: Putative ankyrin repeat protein RBE_0585 (164 aa).

ANK repeat units lie at residues 42-107 and 126-149; these read NQDT…VAIL and DKDT…MLDY.

In Rickettsia bellii (strain RML369-C), this protein is Putative ankyrin repeat protein RBE_0585.